We begin with the raw amino-acid sequence, 232 residues long: Large ribosomal subunit protein uL1 (232 aa).

It belongs to the universal ribosomal protein uL1 family. In terms of assembly, part of the 50S ribosomal subunit.

Its function is as follows. Binds directly to 23S rRNA. The L1 stalk is quite mobile in the ribosome, and is involved in E site tRNA release. Protein L1 is also a translational repressor protein, it controls the translation of the L11 operon by binding to its mRNA. This is Large ribosomal subunit protein uL1 from Burkholderia ambifaria (strain MC40-6).